The chain runs to 320 residues: uncharacterized protein (320 aa).

The segment at 1–40 (MDHPSTSSLPRKKVKAGVKKAGKKTGKKTTGKKKTTPSAI) is disordered. Basic residues predominate over residues 10 to 35 (PRKKVKAGVKKAGKKTGKKTTGKKKT). A helical membrane pass occupies residues 51 to 71 (LLVLLAVLSYLAALSLGLYIM). Residues Asn-92, Asn-122, Asn-154, and Asn-167 are each glycosylated (N-linked (GlcNAc...) asparagine). Transmembrane regions (helical) follow at residues 186–206 (PLVHLLLFFVTGIMLFVAMTG) and 216–236 (MLVTAIALSAFSLALALVTVL). N-linked (GlcNAc...) asparagine glycosylation occurs at Asn-247. Residues 272 to 292 (VQGALVAIVAVFYLTMGVVFV) traverse the membrane as a helical segment.

It is found in the membrane. It participates in secondary metabolite biosynthesis; terpenoid biosynthesis. Functionally, part of the gene cluster that mediates the biosynthesis of an ophiobolin family sesterterpenoid. This is an uncharacterized protein from Aspergillus terreus.